The sequence spans 334 residues: Holliday junction branch migration complex subunit RuvB (334 aa).

The large ATPase domain (RuvB-L) stretch occupies residues 4 to 184; sequence ADRLIQPQLQ…FGIPLRLEFY (181 aa). Residues Arg24, Gly65, Lys68, Thr69, Thr70, 131-133, Arg174, Tyr184, and Arg221 each bind ATP; that span reads EDY. Thr69 contributes to the Mg(2+) binding site. Residues 185–255 form a small ATPAse domain (RuvB-S) region; sequence NVKDLSTIVS…VAEHALDLLD (71 aa). Positions 258–334 are head domain (RuvB-H); sequence GEGFDYMDRK…YLHFGMIKPE (77 aa). Residues Arg294, Arg313, and Arg318 each contribute to the DNA site.

This sequence belongs to the RuvB family. As to quaternary structure, homohexamer. Forms an RuvA(8)-RuvB(12)-Holliday junction (HJ) complex. HJ DNA is sandwiched between 2 RuvA tetramers; dsDNA enters through RuvA and exits via RuvB. An RuvB hexamer assembles on each DNA strand where it exits the tetramer. Each RuvB hexamer is contacted by two RuvA subunits (via domain III) on 2 adjacent RuvB subunits; this complex drives branch migration. In the full resolvosome a probable DNA-RuvA(4)-RuvB(12)-RuvC(2) complex forms which resolves the HJ.

Its subcellular location is the cytoplasm. It carries out the reaction ATP + H2O = ADP + phosphate + H(+). Functionally, the RuvA-RuvB-RuvC complex processes Holliday junction (HJ) DNA during genetic recombination and DNA repair, while the RuvA-RuvB complex plays an important role in the rescue of blocked DNA replication forks via replication fork reversal (RFR). RuvA specifically binds to HJ cruciform DNA, conferring on it an open structure. The RuvB hexamer acts as an ATP-dependent pump, pulling dsDNA into and through the RuvAB complex. RuvB forms 2 homohexamers on either side of HJ DNA bound by 1 or 2 RuvA tetramers; 4 subunits per hexamer contact DNA at a time. Coordinated motions by a converter formed by DNA-disengaged RuvB subunits stimulates ATP hydrolysis and nucleotide exchange. Immobilization of the converter enables RuvB to convert the ATP-contained energy into a lever motion, pulling 2 nucleotides of DNA out of the RuvA tetramer per ATP hydrolyzed, thus driving DNA branch migration. The RuvB motors rotate together with the DNA substrate, which together with the progressing nucleotide cycle form the mechanistic basis for DNA recombination by continuous HJ branch migration. Branch migration allows RuvC to scan DNA until it finds its consensus sequence, where it cleaves and resolves cruciform DNA. The protein is Holliday junction branch migration complex subunit RuvB of Shewanella sp. (strain MR-7).